The following is a 424-amino-acid chain: Serine--tRNA ligase (424 aa).

230-232 (TAE) is a binding site for L-serine. 261 to 263 (RAE) serves as a coordination point for ATP. L-serine is bound at residue Glu-284. Residue 348 to 351 (EISS) coordinates ATP. Ser-384 serves as a coordination point for L-serine.

The protein belongs to the class-II aminoacyl-tRNA synthetase family. Type-1 seryl-tRNA synthetase subfamily. Homodimer. The tRNA molecule binds across the dimer.

The protein resides in the cytoplasm. It catalyses the reaction tRNA(Ser) + L-serine + ATP = L-seryl-tRNA(Ser) + AMP + diphosphate + H(+). The catalysed reaction is tRNA(Sec) + L-serine + ATP = L-seryl-tRNA(Sec) + AMP + diphosphate + H(+). Its pathway is aminoacyl-tRNA biosynthesis; selenocysteinyl-tRNA(Sec) biosynthesis; L-seryl-tRNA(Sec) from L-serine and tRNA(Sec): step 1/1. Its function is as follows. Catalyzes the attachment of serine to tRNA(Ser). Is also able to aminoacylate tRNA(Sec) with serine, to form the misacylated tRNA L-seryl-tRNA(Sec), which will be further converted into selenocysteinyl-tRNA(Sec). This is Serine--tRNA ligase from Desulforamulus reducens (strain ATCC BAA-1160 / DSM 100696 / MI-1) (Desulfotomaculum reducens).